A 576-amino-acid chain; its full sequence is Arginine--tRNA ligase (576 aa).

Residues 122–132 carry the 'HIGH' region motif; the sequence is PNVAKQMHVGH.

The protein belongs to the class-I aminoacyl-tRNA synthetase family. In terms of assembly, monomer.

It localises to the cytoplasm. The enzyme catalyses tRNA(Arg) + L-arginine + ATP = L-arginyl-tRNA(Arg) + AMP + diphosphate. This Yersinia pestis bv. Antiqua (strain Antiqua) protein is Arginine--tRNA ligase.